A 116-amino-acid polypeptide reads, in one-letter code: Ribosome-binding factor A (116 aa).

It belongs to the RbfA family. As to quaternary structure, monomer. Binds 30S ribosomal subunits, but not 50S ribosomal subunits or 70S ribosomes.

The protein resides in the cytoplasm. One of several proteins that assist in the late maturation steps of the functional core of the 30S ribosomal subunit. Associates with free 30S ribosomal subunits (but not with 30S subunits that are part of 70S ribosomes or polysomes). Required for efficient processing of 16S rRNA. May interact with the 5'-terminal helix region of 16S rRNA. The chain is Ribosome-binding factor A from Streptococcus agalactiae.